Reading from the N-terminus, the 227-residue chain is 2,3-bisphosphoglycerate-dependent phosphoglycerate mutase (227 aa).

Substrate contacts are provided by residues 7 to 14 (RHGQSEWN), 20 to 21 (TG), R59, 86 to 89 (ERHY), K97, 113 to 114 (RR), and 182 to 183 (GN). H8 acts as the Tele-phosphohistidine intermediate in catalysis. E86 acts as the Proton donor/acceptor in catalysis.

The protein belongs to the phosphoglycerate mutase family. BPG-dependent PGAM subfamily. Homodimer.

It carries out the reaction (2R)-2-phosphoglycerate = (2R)-3-phosphoglycerate. It participates in carbohydrate degradation; glycolysis; pyruvate from D-glyceraldehyde 3-phosphate: step 3/5. Its function is as follows. Catalyzes the interconversion of 2-phosphoglycerate and 3-phosphoglycerate. This Neisseria meningitidis serogroup B (strain ATCC BAA-335 / MC58) protein is 2,3-bisphosphoglycerate-dependent phosphoglycerate mutase.